We begin with the raw amino-acid sequence, 123 residues long: Large ribosomal subunit protein bL12 (123 aa).

Belongs to the bacterial ribosomal protein bL12 family. In terms of assembly, homodimer. Part of the ribosomal stalk of the 50S ribosomal subunit. Forms a multimeric L10(L12)X complex, where L10 forms an elongated spine to which 2 to 4 L12 dimers bind in a sequential fashion. Binds GTP-bound translation factors.

Functionally, forms part of the ribosomal stalk which helps the ribosome interact with GTP-bound translation factors. Is thus essential for accurate translation. The sequence is that of Large ribosomal subunit protein bL12 from Laribacter hongkongensis (strain HLHK9).